A 326-amino-acid chain; its full sequence is DNA polymerase III subunit delta' (326 aa).

DNA polymerase III contains a core (composed of alpha, epsilon and theta chains) that associates with a tau subunit. This core dimerizes to form the POLIII' complex. PolIII' associates with the gamma complex (composed of gamma, delta, delta', psi and chi chains) and with the beta chain to form the complete DNA polymerase III complex.

It catalyses the reaction DNA(n) + a 2'-deoxyribonucleoside 5'-triphosphate = DNA(n+1) + diphosphate. Its function is as follows. DNA polymerase III is a complex, multichain enzyme responsible for most of the replicative synthesis in bacteria. This DNA polymerase also exhibits 3' to 5' exonuclease activity. This is DNA polymerase III subunit delta' (holB) from Buchnera aphidicola subsp. Acyrthosiphon pisum (strain APS) (Acyrthosiphon pisum symbiotic bacterium).